The following is a 494-amino-acid chain: Lysine--tRNA ligase (494 aa).

Residues Glu399 and Glu406 each coordinate Mg(2+).

The protein belongs to the class-II aminoacyl-tRNA synthetase family. Requires Mg(2+) as cofactor.

Its subcellular location is the cytoplasm. The catalysed reaction is tRNA(Lys) + L-lysine + ATP = L-lysyl-tRNA(Lys) + AMP + diphosphate. The protein is Lysine--tRNA ligase (lysS) of Saccharolobus solfataricus (strain ATCC 35092 / DSM 1617 / JCM 11322 / P2) (Sulfolobus solfataricus).